Reading from the N-terminus, the 71-residue chain is DNA gyrase inhibitor YacG (71 aa).

Zn(2+)-binding residues include Cys9, Cys12, Cys28, and Cys32. The segment at 43-71 (EEKRIPSQSESNDSDEWSEMPEQDPKPFN) is disordered. The span at 54–64 (NDSDEWSEMPE) shows a compositional bias: acidic residues.

This sequence belongs to the DNA gyrase inhibitor YacG family. As to quaternary structure, interacts with GyrB. Requires Zn(2+) as cofactor.

Functionally, inhibits all the catalytic activities of DNA gyrase by preventing its interaction with DNA. Acts by binding directly to the C-terminal domain of GyrB, which probably disrupts DNA binding by the gyrase. This Proteus mirabilis (strain HI4320) protein is DNA gyrase inhibitor YacG.